A 567-amino-acid polypeptide reads, in one-letter code: Probable serine/threonine-protein kinase WNK6 (567 aa).

Residues 28–285 (IRYKEVIGKG…AKELLLDPFL (258 aa)) form the Protein kinase domain. ATP is bound by residues 108–111 (TELF) and lysine 158. Aspartate 175 acts as the Proton acceptor in catalysis. The segment covering 499–509 (VDATKGEDKSS) has biased composition (basic and acidic residues). The disordered stretch occupies residues 499–528 (VDATKGEDKSSIQEVEEATEPVSLEEEERL). The segment covering 512–525 (EVEEATEPVSLEEE) has biased composition (acidic residues). Residues 519–553 (PVSLEEEERLRQELEEIEAKYQEDMKEIATKREEA) adopt a coiled-coil conformation.

Belongs to the protein kinase superfamily. Ser/Thr protein kinase family. WNK subfamily.

It catalyses the reaction L-seryl-[protein] + ATP = O-phospho-L-seryl-[protein] + ADP + H(+). The enzyme catalyses L-threonyl-[protein] + ATP = O-phospho-L-threonyl-[protein] + ADP + H(+). Its function is as follows. May regulate flowering time by modulating the photoperiod pathway. The sequence is that of Probable serine/threonine-protein kinase WNK6 (WNK6) from Arabidopsis thaliana (Mouse-ear cress).